Consider the following 42-residue polypeptide: Photosystem I reaction center subunit IX (42 aa).

Residues 7–27 (FLSTAPVLIMALLTFTAGLLI) form a helical membrane-spanning segment.

This sequence belongs to the PsaJ family.

The protein resides in the cellular thylakoid membrane. May help in the organization of the PsaE and PsaF subunits. This chain is Photosystem I reaction center subunit IX, found in Rippkaea orientalis (strain PCC 8801 / RF-1) (Cyanothece sp. (strain PCC 8801)).